The sequence spans 199 residues: dITP/XTP pyrophosphatase (199 aa).

Position 8-13 (8-13 (THNRNK)) interacts with substrate. Asp-68 (proton acceptor) is an active-site residue. Asp-68 contacts Mg(2+). Residues Ser-69, 151–154 (HGYD), Lys-174, and 179–180 (HR) each bind substrate.

It belongs to the HAM1 NTPase family. As to quaternary structure, homodimer. Requires Mg(2+) as cofactor.

It carries out the reaction XTP + H2O = XMP + diphosphate + H(+). It catalyses the reaction dITP + H2O = dIMP + diphosphate + H(+). The catalysed reaction is ITP + H2O = IMP + diphosphate + H(+). Its function is as follows. Pyrophosphatase that catalyzes the hydrolysis of nucleoside triphosphates to their monophosphate derivatives, with a high preference for the non-canonical purine nucleotides XTP (xanthosine triphosphate), dITP (deoxyinosine triphosphate) and ITP. Seems to function as a house-cleaning enzyme that removes non-canonical purine nucleotides from the nucleotide pool, thus preventing their incorporation into DNA/RNA and avoiding chromosomal lesions. In Leifsonia xyli subsp. xyli (strain CTCB07), this protein is dITP/XTP pyrophosphatase.